The sequence spans 675 residues: Vitamin K-dependent protein S (675 aa).

The signal sequence occupies residues 1–24; that stretch reads MRVLSVRFRVLLACLALVLPNSET. Residues 25 to 41 constitute a propeptide that is removed on maturation; the sequence is NFLSKERASQVLVRKRR. The 46-residue stretch at 42–87 folds into the Gla domain; it reads ANTLLEETKKGNLERECIEELCNKEEAREVFENNPETDYFYPKYLG. 4-carboxyglutamate is present on residues Glu-47, Glu-48, Glu-55, Glu-57, Glu-60, Glu-61, Glu-66, Glu-67, Glu-70, Glu-73, and Glu-77. Cys-58 and Cys-63 form a disulfide bridge. The segment at 88–116 is thrombin-sensitive; the sequence is CLGAFRVGAFSAARQSANAYPDLRSCVNA. The EGF-like 1 domain maps to 117–155; sequence IPDQCDPMPCNEDGYLSCKDGQGAFTCICKPGWQGDKCQ. Intrachain disulfides connect Cys-121–Cys-134, Cys-126–Cys-143, Cys-145–Cys-154, Cys-161–Cys-175, Cys-171–Cys-184, Cys-186–Cys-199, Cys-205–Cys-217, Cys-212–Cys-226, Cys-228–Cys-241, Cys-247–Cys-256, Cys-252–Cys-265, Cys-267–Cys-282, and Cys-449–Cys-475. Asp-136 carries the post-translational modification (3R)-3-hydroxyaspartate. The 44-residue stretch at 157 to 200 folds into the EGF-like 2; calcium-binding domain; the sequence is DINECKDPSNINGGCSQTCDNTPGSYHCSCKIGFAMLTNKKDCK. Positions 201–242 constitute an EGF-like 3; calcium-binding domain; sequence DVDECSLKPSVCGTAVCKNIPGDFECECPNGYRYDPSSKSCK. Positions 243 to 283 constitute an EGF-like 4; calcium-binding domain; sequence DVDECSENTCAQLCVNYPGGYSCYCDGKKGFKLAQDQRSCE. Laminin G-like domains follow at residues 299–475 and 484–665; these read LLYL…NKHC and YYPG…AHSC. N-linked (GlcNAc...) asparagine glycans are attached at residues Asn-499 and Asn-509.

Post-translationally, the iron and 2-oxoglutarate dependent 3-hydroxylation of aspartate and asparagine is (R) stereospecific within EGF domains. As to expression, plasma.

Its subcellular location is the secreted. In terms of biological role, anticoagulant plasma protein; it is a cofactor to activated protein C in the degradation of coagulation factors Va and VIIIa. It helps to prevent coagulation and stimulating fibrinolysis. The sequence is that of Vitamin K-dependent protein S (Pros1) from Rattus norvegicus (Rat).